The primary structure comprises 296 residues: 4-hydroxybenzoate octaprenyltransferase (296 aa).

9 helical membrane passes run 29–49 (IGIY…AEGV), 55–75 (LFIF…INDY), 102–122 (ALVL…FTNA), 124–141 (TIWL…YPFM), 146–166 (FYPQ…AFTA), 169–189 (GSLP…TVAY), 216–236 (ADRL…LLAG), 239–259 (FELG…FVWE), and 271–291 (CFNA…GIVL).

Belongs to the UbiA prenyltransferase family. It depends on Mg(2+) as a cofactor.

It is found in the cell inner membrane. It catalyses the reaction all-trans-octaprenyl diphosphate + 4-hydroxybenzoate = 4-hydroxy-3-(all-trans-octaprenyl)benzoate + diphosphate. It participates in cofactor biosynthesis; ubiquinone biosynthesis. Its function is as follows. Catalyzes the prenylation of para-hydroxybenzoate (PHB) with an all-trans polyprenyl group. Mediates the second step in the final reaction sequence of ubiquinone-8 (UQ-8) biosynthesis, which is the condensation of the polyisoprenoid side chain with PHB, generating the first membrane-bound Q intermediate 3-octaprenyl-4-hydroxybenzoate. The polypeptide is 4-hydroxybenzoate octaprenyltransferase (Ectopseudomonas mendocina (strain ymp) (Pseudomonas mendocina)).